The sequence spans 220 residues: CDP-diacylglycerol--inositol 3-phosphatidyltransferase (220 aa).

Residues 1–20 lie on the Cytoplasmic side of the membrane; that stretch reads MSSNSTPEKVTAEHVLWYIP. A helical transmembrane segment spans residues 21 to 41; that stretch reads NKIGYVRVITAALSFFVMKNH. Residues 42–45 lie on the Lumenal side of the membrane; that stretch reads PTAF. A helical membrane pass occupies residues 46 to 66; the sequence is TWLYSTSCLLDALDGTMARKY. Mg(2+) contacts are provided by Asp56 and Asp59. A CDP-1,2-diacyl-sn-glycerol contacts are provided by Gly60, Arg64, and Ser70. The Cytoplasmic segment spans residues 67-75; the sequence is NQVSSLGAV. Residues 76-96 traverse the membrane as a helical segment; that stretch reads LDMVTDRSSTAGLMCFLCVQY. Mg(2+) is bound by residues Asp77 and Asp81. Asp81 (proton acceptor) is an active-site residue. Topologically, residues 97–98 are lumenal; that stretch reads PQ. The chain crosses the membrane as a helical span at residues 99–119; the sequence is WCVFFQLMLGLDITSHYMHMY. Topologically, residues 120-145 are cytoplasmic; it reads ASLSAGKTSHKSVGEGESRLLHLYYT. Residues 146–166 form a helical membrane-spanning segment; the sequence is RRDVLFTICAFNELFYAGLYL. Residues 167 to 170 are Lumenal-facing; that stretch reads QLFS. Residues 171 to 191 form a helical membrane-spanning segment; it reads NSATFGKWTTIISFPGYVFKQ. Residues 192 to 220 are Cytoplasmic-facing; the sequence is TANVVQLKRAALILADNDAKNANEKNKTY.

The protein belongs to the CDP-alcohol phosphatidyltransferase class-I family. The cofactor is Mn(2+). It depends on Mg(2+) as a cofactor.

Its subcellular location is the microsome membrane. The protein resides in the endoplasmic reticulum membrane. It localises to the golgi apparatus membrane. The protein localises to the mitochondrion outer membrane. It catalyses the reaction a CDP-1,2-diacyl-sn-glycerol + myo-inositol = a 1,2-diacyl-sn-glycero-3-phospho-(1D-myo-inositol) + CMP + H(+). Catalyzes the synthesis of phosphatidylinositol (PtdIns). This chain is CDP-diacylglycerol--inositol 3-phosphatidyltransferase, found in Saccharomyces cerevisiae (strain ATCC 204508 / S288c) (Baker's yeast).